We begin with the raw amino-acid sequence, 501 residues long: ATP synthase subunit alpha (501 aa).

Residue 169–176 (GDRQTGKT) coordinates ATP.

The protein belongs to the ATPase alpha/beta chains family. F-type ATPases have 2 components, CF(1) - the catalytic core - and CF(0) - the membrane proton channel. CF(1) has five subunits: alpha(3), beta(3), gamma(1), delta(1), epsilon(1). CF(0) has three main subunits: a(1), b(2) and c(9-12). The alpha and beta chains form an alternating ring which encloses part of the gamma chain. CF(1) is attached to CF(0) by a central stalk formed by the gamma and epsilon chains, while a peripheral stalk is formed by the delta and b chains.

The protein resides in the cell membrane. The enzyme catalyses ATP + H2O + 4 H(+)(in) = ADP + phosphate + 5 H(+)(out). Produces ATP from ADP in the presence of a proton gradient across the membrane. The alpha chain is a regulatory subunit. The polypeptide is ATP synthase subunit alpha (Streptococcus equi subsp. equi (strain 4047)).